Reading from the N-terminus, the 312-residue chain is tRNA uridine(34) hydroxylase (312 aa).

In terms of domain architecture, Rhodanese spans 124–218 (SDPEVLLIDT…YLEEVPEQES (95 aa)). Residue cysteine 178 is the Cysteine persulfide intermediate of the active site. A disordered region spans residues 293–312 (AKARNQPHPIGRNYRLPSEA).

The protein belongs to the TrhO family.

It catalyses the reaction uridine(34) in tRNA + AH2 + O2 = 5-hydroxyuridine(34) in tRNA + A + H2O. Its function is as follows. Catalyzes oxygen-dependent 5-hydroxyuridine (ho5U) modification at position 34 in tRNAs. This chain is tRNA uridine(34) hydroxylase, found in Pseudomonas syringae pv. syringae (strain B728a).